The chain runs to 144 residues: Maximins 5/H4 type 3 (144 aa).

The N-terminal stretch at 1-18 is a signal peptide; sequence MNFKYIVAVSFLIASAYA. Propeptides lie at residues 19–43 and 74–123; these read RSVQ…REIR and TAED…KEKR. At L143 the chain carries Leucine amide.

This sequence belongs to the bombinin family. As to expression, expressed by the skin glands.

It localises to the secreted. Functionally, maximin-5 shows antibacterial activity against both Gram-positive and Gram-negative bacteria. The only exception is the resistance of E.coli. Also shows antimicrobial activity against fungi C.albicans, A.flavus and P.uticale. It has little hemolytic activity. It does not possess a significant cytotoxicity against tumor cell lines. It does not possess a significant anti-HIV activity. Its function is as follows. Maximin-H4 shows antibacterial activity against both Gram-positive and Gram-negative bacteria. It also shows antimicrobial activity against the fungus C.albicans. Shows strong hemolytic activity. This Bombina maxima (Giant fire-bellied toad) protein is Maximins 5/H4 type 3.